The chain runs to 255 residues: NAD kinase (255 aa).

Asp44 serves as the catalytic Proton acceptor. NAD(+) is bound by residues 44 to 45 (DG), His49, 114 to 115 (NE), Asp144, Ala152, 155 to 160 (SAYNLS), and Gln216.

The protein belongs to the NAD kinase family. It depends on a divalent metal cation as a cofactor.

Its subcellular location is the cytoplasm. The catalysed reaction is NAD(+) + ATP = ADP + NADP(+) + H(+). Functionally, involved in the regulation of the intracellular balance of NAD and NADP, and is a key enzyme in the biosynthesis of NADP. Catalyzes specifically the phosphorylation on 2'-hydroxyl of the adenosine moiety of NAD to yield NADP. The protein is NAD kinase of Rickettsia akari (strain Hartford).